The chain runs to 366 residues: Histone-lysine N-methyltransferase SETD7 (366 aa).

3 MORN repeats span residues 36–58 (FEGH…DGST), 59–81 (LEGF…DGGS), and 106–128 (FKGQ…DGGS). In terms of domain architecture, SET spans 214–336 (ERVYVNDSLI…KDEELTVAYG (123 aa)). S-adenosyl-L-methionine contacts are provided by residues 226 to 228 (AGE), N296, and H297.

The protein belongs to the class V-like SAM-binding methyltransferase superfamily. Histone-lysine methyltransferase family. SET7 subfamily.

It is found in the nucleus. The protein localises to the chromosome. It carries out the reaction L-lysyl(4)-[histone H3] + S-adenosyl-L-methionine = N(6)-methyl-L-lysyl(4)-[histone H3] + S-adenosyl-L-homocysteine + H(+). The enzyme catalyses L-lysyl-[protein] + S-adenosyl-L-methionine = N(6)-methyl-L-lysyl-[protein] + S-adenosyl-L-homocysteine + H(+). Its function is as follows. Histone methyltransferase that specifically monomethylates 'Lys-4' of histone H3. H3 'Lys-4' methylation represents a specific tag for epigenetic transcriptional activation. Plays a central role in the transcriptional activation of genes. Also has methyltransferase activity toward non-histone proteins. The protein is Histone-lysine N-methyltransferase SETD7 (setd7) of Xenopus tropicalis (Western clawed frog).